We begin with the raw amino-acid sequence, 60 residues long: MAGTLKITLKKGLAGRDQRIIATLKSLGLTKLNKTVERPDNPAVRGMIARVAHMVEVQEG.

The protein belongs to the universal ribosomal protein uL30 family. Part of the 50S ribosomal subunit.

The protein is Large ribosomal subunit protein uL30 of Symbiobacterium thermophilum (strain DSM 24528 / JCM 14929 / IAM 14863 / T).